The following is a 206-amino-acid chain: LexA repressor (206 aa).

The H-T-H motif DNA-binding region spans R28–K48. Catalysis depends on for autocatalytic cleavage activity residues S123 and K160.

Belongs to the peptidase S24 family. In terms of assembly, homodimer.

It carries out the reaction Hydrolysis of Ala-|-Gly bond in repressor LexA.. Functionally, represses a number of genes involved in the response to DNA damage (SOS response), including recA and lexA. In the presence of single-stranded DNA, RecA interacts with LexA causing an autocatalytic cleavage which disrupts the DNA-binding part of LexA, leading to derepression of the SOS regulon and eventually DNA repair. This is LexA repressor from Vibrio parahaemolyticus serotype O3:K6 (strain RIMD 2210633).